The sequence spans 24 residues: Humanin-like 12 (24 aa).

The protein belongs to the humanin family.

Its subcellular location is the secreted. The protein localises to the cytoplasm. Functionally, plays a role as a neuroprotective and antiapoptotic factor. This is Humanin-like 12 from Homo sapiens (Human).